Consider the following 68-residue polypeptide: Small cysteine-rich protein 5 (68 aa).

The N-terminal stretch at 1-24 is a signal peptide; the sequence is MAVKFHLCLLLIILVGMGAHVAFA.

Belongs to the Cnidaria small cysteine-rich protein (SCRiP) family. gamma subfamily. In terms of processing, contains 4 disulfide bonds.

Its subcellular location is the secreted. It is found in the nematocyst. Induces neurotoxic symptoms on zebrafish. Has also been claimed to be implied in calcification, but tests on homolog proteins suggest that proteins of this family have a neurotoxic function and not a calcification function. The chain is Small cysteine-rich protein 5 from Orbicella faveolata (Mountainous star coral).